The following is a 489-amino-acid chain: UBX domain-containing protein 7 (489 aa).

An N-acetylalanine modification is found at A2. In terms of domain architecture, UBA spans 2–54; sequence AAHGGSAASSALKGLIQQFTTITGASESVGKHMLEACNNNLEMAVTMFLDGGG. The segment at 56–77 is disordered; that stretch reads AEEPSTSSASVSTVRPHTEEEV. A compositionally biased stretch (polar residues) spans 59–70; that stretch reads PSTSSASVSTVR. K84 is covalently cross-linked (Glycyl lysine isopeptide (Lys-Gly) (interchain with G-Cter in SUMO2)). Residue K99 forms a Glycyl lysine isopeptide (Lys-Gly) (interchain with G-Cter in ubiquitin) linkage. K134 participates in a covalent cross-link: Glycyl lysine isopeptide (Lys-Gly) (interchain with G-Cter in SUMO2). Phosphoserine is present on residues S278, S280, S285, and S288. Residues 285–304 form the UIM domain; sequence SEDSQLEAAIRASLQETHFD. The segment covering 300–309 has biased composition (polar residues); that stretch reads ETHFDSTQTK. Residues 300 to 384 form a disordered region; it reads ETHFDSTQTK…PGTATNHQGL (85 aa). A Phosphothreonine modification is found at T306. The span at 352–366 shows a compositional bias: basic and acidic residues; that stretch reads HKDLGHRKEENRRPL. One can recognise a UBX domain in the interval 408-485; the sequence is VNGPKAQLML…GLCPQETVFV (78 aa).

Interacts with neddylated CUL2, ubiquitinated HIF1A, and VCP/p97.

Its subcellular location is the nucleus. Functionally, ubiquitin-binding adapter that links a subset of NEDD8-associated cullin ring ligases (CRLs) to the segregase VCP/p97, to regulate turnover of their ubiquitination substrates. This chain is UBX domain-containing protein 7 (UBXN7), found in Homo sapiens (Human).